The sequence spans 40 residues: Photosystem I reaction center subunit IX (40 aa).

Residues Ala12–Phe34 form a helical membrane-spanning segment.

Belongs to the PsaJ family.

The protein resides in the plastid. It is found in the chloroplast thylakoid membrane. Functionally, may help in the organization of the PsaE and PsaF subunits. The polypeptide is Photosystem I reaction center subunit IX (Emiliania huxleyi (Coccolithophore)).